Here is an 820-residue protein sequence, read N- to C-terminus: Nuclear pore complex protein Nup93 (820 aa).

It belongs to the nucleoporin interacting component (NIC) family.

Its subcellular location is the nucleus membrane. It localises to the nucleus. The protein resides in the nuclear pore complex. Plays a role in the nuclear pore complex (NPC) assembly and/or maintenance. The chain is Nuclear pore complex protein Nup93 (dye) from Danio rerio (Zebrafish).